We begin with the raw amino-acid sequence, 408 residues long: Alpha-2Da adrenergic receptor (408 aa).

Topologically, residues 1–30 are extracellular; the sequence is MSVTPTANSTEEAANITASPRLWPYTEPAS. 2 N-linked (GlcNAc...) asparagine glycosylation sites follow: asparagine 8 and asparagine 15. Residues 31–55 form a helical membrane-spanning segment; that stretch reads AIIILVVSLIILLTIVGNVLVIVAV. Residues 56 to 67 are Cytoplasmic-facing; that stretch reads LTSRALRAPQNL. A helical membrane pass occupies residues 68–93; that stretch reads FLVSLACADILVATLVIPFSLANEIM. Over 94–103 the chain is Extracellular; sequence GYWYFGSTWC. Residues cysteine 103 and cysteine 176 are joined by a disulfide bond. The helical transmembrane segment at 104 to 126 threads the bilayer; sequence AFYLALDVLFCTSSIVHLCAISL. The Cytoplasmic portion of the chain corresponds to 127-147; that stretch reads DRYWSVTKAVRYNLKRTPRRI. Residues 148–170 traverse the membrane as a helical segment; it reads KCMIAVVWLISAVISFPPLIMTK. Residues 171–181 lie on the Extracellular side of the membrane; it reads HDEKECLINDE. The helical transmembrane segment at 182–205 threads the bilayer; the sequence is TWYILSSCAVSFFAPGLIMITVYC. Residues 206 to 332 lie on the Cytoplasmic side of the membrane; the sequence is KIYRVAKQRS…QMREKRFTFV (127 aa). The tract at residues 242-306 is disordered; sequence FEKESPSSNS…SCRVSWAAHQ (65 aa). The span at 260–270 shows a compositional bias: acidic residues; it reads ELDDIDLEESA. Residues 277 to 286 show a composition bias toward basic residues; the sequence is RGSRFSKRRR. The chain crosses the membrane as a helical span at residues 333–356; it reads LAVVMGVFVLCWFPFFFTYSLQAV. Over 357-369 the chain is Extracellular; sequence CGERCGPPEALFK. The helical transmembrane segment at 370-390 threads the bilayer; it reads LFFWIGYCNSSVNPIIYTIFN. Residues 391 to 408 lie on the Cytoplasmic side of the membrane; it reads RDFRKAFKKVVCWSAQRT.

This sequence belongs to the G-protein coupled receptor 1 family. Adrenergic receptor subfamily. ADRA2D sub-subfamily.

Its subcellular location is the cell membrane. Its function is as follows. Alpha-2 adrenergic receptors mediate the catecholamine-induced inhibition of adenylate cyclase through the action of G proteins. The order of potency for this receptor is dexmedetomidine &gt; norepinephrine &gt; epinephrine &gt; oxymetazoline. In Danio rerio (Zebrafish), this protein is Alpha-2Da adrenergic receptor (adra2da).